Reading from the N-terminus, the 310-residue chain is Porphobilinogen deaminase (310 aa).

C242 carries the post-translational modification S-(dipyrrolylmethanemethyl)cysteine.

It belongs to the HMBS family. As to quaternary structure, monomer. It depends on dipyrromethane as a cofactor.

The catalysed reaction is 4 porphobilinogen + H2O = hydroxymethylbilane + 4 NH4(+). Its pathway is porphyrin-containing compound metabolism; protoporphyrin-IX biosynthesis; coproporphyrinogen-III from 5-aminolevulinate: step 2/4. In terms of biological role, tetrapolymerization of the monopyrrole PBG into the hydroxymethylbilane pre-uroporphyrinogen in several discrete steps. In Shewanella baltica (strain OS155 / ATCC BAA-1091), this protein is Porphobilinogen deaminase.